We begin with the raw amino-acid sequence, 1373 residues long: MDPIRSRTPSPARELLPGPQPDRVQPTADRGGAPPAGGPLDGLPARRTMSRTRLPSPPAPSPAFSAGSFSDLLRQFDPSLLDTSLLDSMPAVGTPHTAAAPAECDEVQSGLRAADDPPPTVRVAVTAARPPRAKPAPRRRAAQPSDASPAAQVDLRTLGYSQQQQEKIKPKVGSTVAQHHEALVGHGFTHAHIVALSRHPAALGTVAVKYQDMIAALPEATHEDIVGVGKQWSGARALEALLTVAGELRGPPLQLDTGQLVKIAKRGGVTAVEAVHASRNALTGAPLNLTPAQVVAIASNNGGKQALETVQRLLPVLCQAHGLTPAQVVAIASHDGGKQALETMQRLLPVLCQAHGLPPDQVVAIASNIGGKQALETVQRLLPVLCQAHGLTPDQVVAIASHGGGKQALETVQRLLPVLCQAHGLTPDQVVAIASHDGGKQALETVQRLLPVLCQAHGLTPDQVVAIASNGGGKQALETVQRLLPVLCQAHGLTPDQVVAIASNGGKQALETVQRLLPVLCQAHGLTPDQVVAIASHDGGKQALETVQRLLPVLCQTHGLTPAQVVAIASHDGGKQALETVQQLLPVLCQAHGLTPDQVVAIASNIGGKQALATVQRLLPVLCQAHGLTPDQVVAIASNGGGKQALETVQRLLPVLCQAHGLTPDQVVAIASNGGGKQALETVQRLLPVLCQAHGLTQVQVVAIASNIGGKQALETVQRLLPVLCQAHGLTPAQVVAIASHDGGKQALETVQRLLPVLCQAHGLTPDQVVAIASNGGGKQALETVQRLLPVLCQAHGLTQEQVVAIASNNGGKQALETVQRLLPVLCQAHGLTPDQVVAIASNGGGKQALETVQRLLPVLCQAHGLTPAQVVAIASNIGGKQALETVQRLLPVLCQDHGLTLAQVVAIASNIGGKQALETVQRLLPVLCQAHGLTQDQVVAIASNIGGKQALETVQRLLPVLCQDHGLTPDQVVAIASNIGGKQALETVQRLLPVLCQDHGLTLDQVVAIASNGGKQALETVQRLLPVLCQDHGLTPDQVVAIASNSGGKQALETVQRLLPVLCQDHGLTPNQVVAIASNGGKQALESIVAQLSRPDPALAALTNDHLVALACLGGRPAMDAVKKGLPHAPELIRRVNRRIGERTSHRVADYAQVVRVLEFFQCHSHPAYAFDEAMTQFGMSRNGLVQLFRRVGVTELEARGGTLPPASQRWDRILQASGMKRAKPSPTSAQTPDQASLHAFADSLERDLDAPSPMHEGDQTGASSRKRSRSDRAVTGPSAQHSFEVRVPEQRDALHLPLSWRVKRPRTRIGGGLPDPGTPIAADLAASSTVMWEQDAAPFAGAADDFPAFNEEELAWLMELLPQSGSVGGTI.

Disordered stretches follow at residues 1 to 68 and 127 to 152; these read MDPI…SAGS and AARPPRAKPAPRRRAAQPSDASPAAQ. Basic residues predominate over residues 131–141; it reads PRAKPAPRRRA. Low complexity predominate over residues 142–152; the sequence is AQPSDASPAAQ. The Cryptic repeat -1 repeat unit spans residues 221-239; that stretch reads THEDIVGVGKQWSGARALE. Residues 256-273 form a Cryptic repeat 0 repeat; that stretch reads DTGQLVKIAKRGGVTAVE. 23 Core repeat repeats span residues 289-322, 323-356, 357-390, 391-424, 425-458, 459-492, 493-525, 526-559, 560-593, 594-627, 628-661, 662-695, 696-729, 730-763, 764-797, 798-831, 832-865, 866-899, 900-933, 934-967, 968-1001, 1002-1034, and 1035-1068; these read LTPAQVVAIASNNGGKQALETVQRLLPVLCQAHG, LTPAQVVAIASHDGGKQALETMQRLLPVLCQAHG, LPPDQVVAIASNIGGKQALETVQRLLPVLCQAHG, LTPDQVVAIASHGGGKQALETVQRLLPVLCQAHG, LTPDQVVAIASHDGGKQALETVQRLLPVLCQAHG, LTPDQVVAIASNGGGKQALETVQRLLPVLCQAHG, LTPDQVVAIASNGGKQALETVQRLLPVLCQAHG, LTPDQVVAIASHDGGKQALETVQRLLPVLCQTHG, LTPAQVVAIASHDGGKQALETVQQLLPVLCQAHG, LTPDQVVAIASNIGGKQALATVQRLLPVLCQAHG, LTQVQVVAIASNIGGKQALETVQRLLPVLCQAHG, LTPAQVVAIASHDGGKQALETVQRLLPVLCQAHG, LTQEQVVAIASNNGGKQALETVQRLLPVLCQAHG, LTPAQVVAIASNIGGKQALETVQRLLPVLCQDHG, LTLAQVVAIASNIGGKQALETVQRLLPVLCQAHG, LTQDQVVAIASNIGGKQALETVQRLLPVLCQDHG, LTPDQVVAIASNIGGKQALETVQRLLPVLCQDHG, LTLDQVVAIASNGGKQALETVQRLLPVLCQDHG, and LTPDQVVAIASNSGGKQALETVQRLLPVLCQDHG. 4 HEAT repeats span residues 714-760, 782-828, 850-893, and 918-961; these read LETV…VLCQ and LETV…LLPV. One copy of the HEAT 5 repeat lies at 1053 to 1091; that stretch reads LETVQRLLPVLCQDHGLTPNQVVAIASNGGKQALESIVA. The Core repeat 23.5 repeat unit spans residues 1069 to 1087; sequence LTPNQVVAIASNGGKQALE. Residues 1136–1364 form an acidic activation domain region; that stretch reads RVNRRIGERT…ELAWLMELLP (229 aa). Residues 1222 to 1225 carry the Nuclear localization signal NLS1 motif; that stretch reads KRAK. Positions 1250-1286 are disordered; that stretch reads LDAPSPMHEGDQTGASSRKRSRSDRAVTGPSAQHSFE. Positions 1268–1271 match the Nuclear localization signal NLS2 motif; that stretch reads KRSR. Positions 1305–1308 match the Nuclear localization signal NLS3 motif; the sequence is KRPR.

The protein belongs to the transcription activator-like effector (TALE) family.

It localises to the secreted. The protein resides in the host nucleus. Avirulence protein. Acts as a transcription factor in rice, inducing expression of a number of host genes including SWEET11 (Os8N3, XA13, AC Q6YZF3) in susceptible plants with the Xa13 allele. Plants with the xa13 allele, which has an altered promoter, are resistant to bacterial blight caused by this bacterial strain and do not induce SWEET11. The xa13 allele elicits an atypical hypersensitive response (HR). PthXo1 binds SWEET11 promoter DNA in a sequence-specific manner. The protein is TAL effector protein PthXo1 (pthXo1) of Xanthomonas oryzae pv. oryzae (strain PXO99A).